A 125-amino-acid polypeptide reads, in one-letter code: Holo-[acyl-carrier-protein] synthase (125 aa).

Mg(2+) is bound by residues D8 and E56.

It belongs to the P-Pant transferase superfamily. AcpS family. Mg(2+) is required as a cofactor.

It localises to the cytoplasm. The enzyme catalyses apo-[ACP] + CoA = holo-[ACP] + adenosine 3',5'-bisphosphate + H(+). Transfers the 4'-phosphopantetheine moiety from coenzyme A to a Ser of acyl-carrier-protein. The chain is Holo-[acyl-carrier-protein] synthase from Borrelia turicatae (strain 91E135).